Here is a 493-residue protein sequence, read N- to C-terminus: Probable UTP--glucose-1-phosphate uridylyltransferase (493 aa).

Residues 105–108 (LTGK), Gln181, Gly211, and Asp242 each bind UTP. 107-108 (GK) lines the substrate pocket. Residue 240-242 (NVD) coordinates substrate.

It belongs to the UDPGP type 1 family.

The catalysed reaction is alpha-D-glucose 1-phosphate + UTP + H(+) = UDP-alpha-D-glucose + diphosphate. Plays a central role as a glucosyl donor in cellular metabolic pathways. The polypeptide is Probable UTP--glucose-1-phosphate uridylyltransferase (Saccharomyces cerevisiae (strain ATCC 204508 / S288c) (Baker's yeast)).